The following is a 203-amino-acid chain: MFEGPVQDLIDELGKLPGIGPKSAQRIAFHLLSVEPPDIDRLTAVLGRIRDGVTFCSVCGNVSDEERCRICSDPRRDASLVCVVEEPKDVQAVERTREFRGRYHVLGGALDPLSGIGPEQLRIRELLNRIGERVEGVDVAEVIIATDPNTEGEATATYLVRMLRDIPGLTVTRIASGLPMGGDLEFADELTLGRALAGRRAMV.

The C4-type zinc finger occupies 56–71 (CSVCGNVSDEERCRIC). A Toprim domain is found at 79-179 (SLVCVVEEPK…TVTRIASGLP (101 aa)).

It belongs to the RecR family.

Functionally, may play a role in DNA repair. It seems to be involved in an RecBC-independent recombinational process of DNA repair. It may act with RecF and RecO. The chain is Recombination protein RecR from Mycolicibacterium smegmatis (strain ATCC 700084 / mc(2)155) (Mycobacterium smegmatis).